The sequence spans 640 residues: ESX-3 secretion system protein EccA3 (640 aa).

Glycine 393–threonine 400 contacts ATP.

This sequence belongs to the CbxX/CfxQ family. In terms of assembly, part of the ESX-3 / type VII secretion system (T7SS), which is composed of cytosolic and membrane components.

The protein localises to the cytoplasm. Functionally, part of an ESX-3 / type VII specialized secretion system (T7SS), which exports several proteins. EccA3 exhibits ATPase activity and may provide energy for the export of ESX-3 substrates. In Mycobacterium leprae (strain TN), this protein is ESX-3 secretion system protein EccA3.